Consider the following 208-residue polypeptide: Ribosomal RNA large subunit methyltransferase E (208 aa).

S-adenosyl-L-methionine is bound by residues Gly-63, Trp-65, Asp-83, Asp-99, and Asp-124. Residue Lys-164 is the Proton acceptor of the active site.

The protein belongs to the class I-like SAM-binding methyltransferase superfamily. RNA methyltransferase RlmE family.

The protein localises to the cytoplasm. The catalysed reaction is uridine(2552) in 23S rRNA + S-adenosyl-L-methionine = 2'-O-methyluridine(2552) in 23S rRNA + S-adenosyl-L-homocysteine + H(+). Functionally, specifically methylates the uridine in position 2552 of 23S rRNA at the 2'-O position of the ribose in the fully assembled 50S ribosomal subunit. This Salmonella typhi protein is Ribosomal RNA large subunit methyltransferase E.